The following is a 522-amino-acid chain: Kelch domain-containing protein 4 (522 aa).

Over residues 1 to 10 (MGKKGKKEKK) the composition is skewed to basic residues. The interval 1 to 33 (MGKKGKKEKKGRGAEKTAAKMEKKVSKRSRKEE) is disordered. A compositionally biased stretch (basic and acidic residues) spans 11–24 (GRGAEKTAAKMEKK). Kelch repeat units lie at residues 77–129 (ELIL…VVPQ), 133–187 (QLWV…AWKR), 188–241 (QLIL…VTPQ), 243–289 (GIII…MNPS), and 308–361 (QTLF…RRGR). 3 disordered regions span residues 346–378 (QLKG…GAGT), 402–432 (LAAP…PCPR), and 481–522 (DPET…GAED). S413 and S418 each carry phosphoserine. One copy of the Kelch 6 repeat lies at 443-494 (VLYVYGGMFEAGDRQVTLSDLHCLDLHRMEAWKALVEMDPETQEWLEETDSE).

This chain is Kelch domain-containing protein 4 (KLHDC4), found in Pongo abelii (Sumatran orangutan).